A 72-amino-acid chain; its full sequence is Toxin Acra II-3 (72 aa).

Residues 4–67 enclose the LCN-type CS-alpha/beta domain; sequence PGNYPLDTRG…VWNAAKNYCK (64 aa). 3 cysteine pairs are disulfide-bonded: Cys18/Cys41, Cys27/Cys46, and Cys31/Cys48.

It belongs to the long (3 C-C) scorpion toxin superfamily. Sodium channel inhibitor family. Beta subfamily. Expressed by the venom gland.

The protein localises to the secreted. Binds to sodium channels (Nav) and affects the channel activation process. The protein is Toxin Acra II-3 of Androctonus crassicauda (Arabian fat-tailed scorpion).